The sequence spans 426 residues: Homeobox protein knotted-1-like LET12 (426 aa).

Disordered regions lie at residues 1-26 (MEFQDHFSQEMVLHQQQQQQQQQQNA), 85-158 (QTSN…ENSW), and 270-290 (GVAPGEGTGATMSDDDDDQAD). The segment covering 15-24 (QQQQQQQQQQ) has biased composition (low complexity). The span at 104–114 (AGGGSNGGGSG) shows a compositional bias: gly residues. Positions 139-151 (ENNNNNNNNNNNN) are enriched in low complexity. The region spanning 327-347 (ELKHELKQGYKEKIVDIREEI) is the ELK domain. The segment at residues 348–411 (LRKRRAGKLP…NQRKRNWHSN (64 aa)) is a DNA-binding region (homeobox; TALE-type). The interval 406–426 (RNWHSNPSTSSSQKSQTQECR) is disordered. Positions 413-426 (STSSSQKSQTQECR) are enriched in low complexity.

It belongs to the TALE/KNOX homeobox family. As to expression, ubiquitously expressed in the mature plant.

The protein resides in the nucleus. Its function is as follows. May have a role to play in formative events in ovule and embryo morphogenesis. This chain is Homeobox protein knotted-1-like LET12 (LET12), found in Solanum lycopersicum (Tomato).